Reading from the N-terminus, the 467-residue chain is Citrate synthase, mitochondrial (467 aa).

Residues His301 and His347 contribute to the active site.

Belongs to the citrate synthase family.

The protein resides in the mitochondrion matrix. It carries out the reaction oxaloacetate + acetyl-CoA + H2O = citrate + CoA + H(+). Its pathway is carbohydrate metabolism; tricarboxylic acid cycle; isocitrate from oxaloacetate: step 1/2. The polypeptide is Citrate synthase, mitochondrial (CIT) (Candida tropicalis (Yeast)).